We begin with the raw amino-acid sequence, 149 residues long: Nucleoside diphosphate kinase (149 aa).

ATP-binding residues include Lys-9, Phe-57, Arg-85, Thr-91, Arg-102, and Asn-112. The active-site Pros-phosphohistidine intermediate is His-115.

This sequence belongs to the NDK family. Homotetramer. Requires Mg(2+) as cofactor.

It is found in the cytoplasm. It carries out the reaction a 2'-deoxyribonucleoside 5'-diphosphate + ATP = a 2'-deoxyribonucleoside 5'-triphosphate + ADP. The catalysed reaction is a ribonucleoside 5'-diphosphate + ATP = a ribonucleoside 5'-triphosphate + ADP. In terms of biological role, major role in the synthesis of nucleoside triphosphates other than ATP. The ATP gamma phosphate is transferred to the NDP beta phosphate via a ping-pong mechanism, using a phosphorylated active-site intermediate. The protein is Nucleoside diphosphate kinase of Staphylococcus saprophyticus subsp. saprophyticus (strain ATCC 15305 / DSM 20229 / NCIMB 8711 / NCTC 7292 / S-41).